We begin with the raw amino-acid sequence, 464 residues long: Cytoplasmic tRNA 2-thiolation protein 2 (464 aa).

This sequence belongs to the CTU2/NCS2 family.

Its subcellular location is the cytoplasm. It participates in tRNA modification; 5-methoxycarbonylmethyl-2-thiouridine-tRNA biosynthesis. Its function is as follows. Plays a central role in 2-thiolation of mcm(5)S(2)U at tRNA wobble positions of tRNA(Lys), tRNA(Glu) and tRNA(Gln). May act by forming a heterodimer with NCS6/CTU1 that ligates sulfur from thiocarboxylated URM1 onto the uridine of tRNAs at wobble position. The sequence is that of Cytoplasmic tRNA 2-thiolation protein 2 from Oryza sativa subsp. japonica (Rice).